Here is a 217-residue protein sequence, read N- to C-terminus: Growth hormone variant (217 aa).

Residues 1–26 form the signal peptide; that stretch reads MAAGSRTSLLLAFGLLCLSWLQEGSA. Intrachain disulfides connect Cys79–Cys191 and Cys208–Cys215. Ser132 carries the post-translational modification Phosphoserine. Residue Asn166 is glycosylated (N-linked (GlcNAc...) asparagine). Ser176 carries the post-translational modification Phosphoserine.

The protein belongs to the somatotropin/prolactin family. As to quaternary structure, monomer, dimer, trimer, tetramer and pentamer, disulfide-linked or non-covalently associated, in homomeric and heteromeric combinations. Can also form a complex either with GHBP or with the alpha2-macroglobulin complex. In terms of tissue distribution, expressed in the placenta.

The protein localises to the secreted. Its function is as follows. Plays an important role in growth control. Its major role in stimulating body growth is to stimulate the liver and other tissues to secrete IGF1. It stimulates both the differentiation and proliferation of myoblasts. It also stimulates amino acid uptake and protein synthesis in muscle and other tissues. This is Growth hormone variant (GH2) from Homo sapiens (Human).